The primary structure comprises 260 residues: Exosome complex component Rrp4 (260 aa).

The 70-residue stretch at 59–128 folds into the S1 motif domain; the sequence is NDVVIGIVIV…NSMKVELALR (70 aa). Residues 136–194 form the KH domain; the sequence is KTGQIVEVEPVKVPRVIGHGGSMISMLKKETNCSIFVGQNGRIWIDGKDDDVELLSKAL.

This sequence belongs to the RRP4 family. In terms of assembly, component of the archaeal exosome complex. Forms a trimer of Rrp4 and/or Csl4 subunits. The trimer associates with a hexameric ring-like arrangement composed of 3 Rrp41-Rrp42 heterodimers.

Its subcellular location is the cytoplasm. Functionally, non-catalytic component of the exosome, which is a complex involved in RNA degradation. Increases the RNA binding and the efficiency of RNA degradation. Confers strong poly(A) specificity to the exosome. This Methanosarcina barkeri (strain Fusaro / DSM 804) protein is Exosome complex component Rrp4.